The following is a 124-amino-acid chain: Small ribosomal subunit protein uS12 (124 aa).

D89 is modified (3-methylthioaspartic acid).

It belongs to the universal ribosomal protein uS12 family. As to quaternary structure, part of the 30S ribosomal subunit. Contacts proteins S8 and S17. May interact with IF1 in the 30S initiation complex.

In terms of biological role, with S4 and S5 plays an important role in translational accuracy. Interacts with and stabilizes bases of the 16S rRNA that are involved in tRNA selection in the A site and with the mRNA backbone. Located at the interface of the 30S and 50S subunits, it traverses the body of the 30S subunit contacting proteins on the other side and probably holding the rRNA structure together. The combined cluster of proteins S8, S12 and S17 appears to hold together the shoulder and platform of the 30S subunit. This chain is Small ribosomal subunit protein uS12, found in Treponema pallidum subsp. pallidum (strain SS14).